Here is a 351-residue protein sequence, read N- to C-terminus: Methylthioribose-1-phosphate isomerase (351 aa).

The active-site Proton donor is the Asp244.

The protein belongs to the eIF-2B alpha/beta/delta subunits family. MtnA subfamily.

It localises to the cytoplasm. It is found in the nucleus. It catalyses the reaction 5-(methylsulfanyl)-alpha-D-ribose 1-phosphate = 5-(methylsulfanyl)-D-ribulose 1-phosphate. Its pathway is amino-acid biosynthesis; L-methionine biosynthesis via salvage pathway; L-methionine from S-methyl-5-thio-alpha-D-ribose 1-phosphate: step 1/6. Functionally, catalyzes the interconversion of methylthioribose-1-phosphate (MTR-1-P) into methylthioribulose-1-phosphate (MTRu-1-P). The sequence is that of Methylthioribose-1-phosphate isomerase from Anopheles gambiae (African malaria mosquito).